A 160-amino-acid polypeptide reads, in one-letter code: Allophycocyanin alpha chain (160 aa).

Asn70 carries the N4-methylasparagine modification. Position 80 (Cys80) interacts with (2R,3E)-phycocyanobilin.

The protein belongs to the phycobiliprotein family. Component of the phycobilisome. Heterodimer of an alpha and a beta chain. In terms of processing, contains one covalently linked phycocyanobilin chromophore.

The protein localises to the cellular thylakoid membrane. Its function is as follows. Light-harvesting photosynthetic bile pigment-protein from the phycobiliprotein complex. Allophycocyanin has a maximum absorption at approximately 650 nanometers. The sequence is that of Allophycocyanin alpha chain (apcA) from Mastigocladus laminosus (Fischerella sp.).